Consider the following 217-residue polypeptide: Ribulose-phosphate 3-epimerase (217 aa).

Serine 6 lines the substrate pocket. The a divalent metal cation site is built by histidine 29, aspartate 31, and histidine 62. The active-site Proton acceptor is aspartate 31. Substrate is bound by residues histidine 62, 138-141 (GFGG), 171-173 (DGG), and 193-194 (GS). Aspartate 171 serves as a coordination point for a divalent metal cation. Catalysis depends on aspartate 171, which acts as the Proton donor.

The protein belongs to the ribulose-phosphate 3-epimerase family. A divalent metal cation is required as a cofactor.

The enzyme catalyses D-ribulose 5-phosphate = D-xylulose 5-phosphate. It functions in the pathway carbohydrate degradation. Functionally, catalyzes the reversible epimerization of D-ribulose 5-phosphate to D-xylulose 5-phosphate. The sequence is that of Ribulose-phosphate 3-epimerase from Helicobacter pylori (strain ATCC 700392 / 26695) (Campylobacter pylori).